We begin with the raw amino-acid sequence, 1156 residues long: Nuclear pore complex protein Nup133 (1156 aa).

Methionine 1 is subject to N-acetylmethionine. Residues 1 to 39 (MFPAAPSPRTPGTGSRRGPLAGLGPGSTPRTASRKGLPL) form a disordered region. Residues serine 7 and serine 15 each carry the phosphoserine modification. Arginine 17 carries the omega-N-methylarginine modification. The residue at position 27 (serine 27) is a Phosphoserine. Threonine 28 is modified (phosphothreonine). Position 30 is an omega-N-methylarginine (arginine 30). Serine 41, serine 45, serine 50, serine 72, serine 131, serine 480, serine 489, serine 493, serine 501, and serine 755 each carry phosphoserine. The residue at position 787 (lysine 787) is an N6-acetyllysine. A Phosphoserine modification is found at serine 1133.

Belongs to the nucleoporin Nup133 family. As to quaternary structure, forms part of the Nup160 subcomplex in the nuclear pore which is composed of NUP160, NUP133, NUP107 and Nup96. This complex plays a role in RNA export and in tethering Nup98 and NUP153 to the nucleus. As to expression, widely expressed in fetal and adult tissues. Expressed in the brain and kidney.

Its subcellular location is the nucleus. The protein resides in the nuclear pore complex. The protein localises to the chromosome. It localises to the centromere. It is found in the kinetochore. Involved in poly(A)+ RNA transport. Involved in nephrogenesis. The polypeptide is Nuclear pore complex protein Nup133 (NUP133) (Homo sapiens (Human)).